A 408-amino-acid polypeptide reads, in one-letter code: Snake venom metalloproteinase BaP1 (408 aa).

The first 20 residues, methionine 1 to serine 20, serve as a signal peptide directing secretion. A propeptide spanning residues isoleucine 21 to glutamate 191 is cleaved from the precursor. At glutamine 192 the chain carries Pyrrolidone carboxylic acid. The Peptidase M12B domain maps to arginine 198–proline 394. 3 disulfide bridges follow: cysteine 309-cysteine 389, cysteine 349-cysteine 373, and cysteine 351-cysteine 356. A Zn(2+)-binding site is contributed by histidine 334. Residue glutamate 335 is part of the active site. Residues histidine 338 and histidine 344 each coordinate Zn(2+). The propeptide occupies leucine 395 to glutamate 408.

This sequence belongs to the venom metalloproteinase (M12B) family. P-I subfamily. Monomer. Zn(2+) is required as a cofactor. Expressed by the venom gland.

The protein resides in the secreted. Inhibited by EDTA, partially inhibited by o-phenantropine, and not inhibited by PMSF, pepstatin A, and aprotinin. Its function is as follows. Zinc metalloprotease that exhibits a weak hemorrhagic activity (with a minimum hemorrhagic dose of 20 ug by intradermal and intramuscular injection into mice). The basal membrane components collagen (all chains of type IV) (COL4A4), laminin and nidogen are all degraded by this toxin. Rapidly degrades the Aalpha-chain (FGA) of fibrinogen, and later on, degrades the Bbeta-chain (FGB) of fibrinogen. Also activates the complement system, and induces rat neutrophil chemotaxis. Induces edema in mouse food pad and shows a mild myotoxicity. This Bothrops asper (Terciopelo) protein is Snake venom metalloproteinase BaP1.